The primary structure comprises 242 residues: Venom nerve growth factor 3 (242 aa).

The signal sequence occupies residues 1 to 18 (MSMLCYTLIIAFLIGIWA). Residues 19–125 (APQSEDNVPL…ALNRNIQAKR (107 aa)) constitute a propeptide that is removed on maturation. The segment at 45-69 (HEGLKTSRNTDQRHPAPKKVDDQEP) is disordered. A compositionally biased stretch (basic and acidic residues) spans 46–66 (EGLKTSRNTDQRHPAPKKVDD). 3 disulfides stabilise this stretch: cysteine 139–cysteine 203, cysteine 181–cysteine 231, and cysteine 191–cysteine 233.

The protein belongs to the NGF-beta family. Homodimer; non-covalently linked. In terms of tissue distribution, expressed by the venom gland.

It localises to the secreted. In terms of biological role, nerve growth factor is important for the development and maintenance of the sympathetic and sensory nervous systems. It stimulates division and differentiation of sympathetic and embryonic sensory neurons as well as basal forebrain cholinergic neurons in the brain. Its relevance in the snake venom is not clear. However, it has been shown to inhibit metalloproteinase-dependent proteolysis of platelet glycoprotein Ib alpha, suggesting a metalloproteinase inhibition to prevent metalloprotease autodigestion and/or protection against prey proteases. Binds a lipid between the two protein chains in the homodimer. The lipid-bound form promotes histamine relase from mouse mast cells, contrary to the lipid-free form. The sequence is that of Venom nerve growth factor 3 from Pseudechis australis (Mulga snake).